A 999-amino-acid chain; its full sequence is MAGKARVHELAKELGVESKTVLAKLKEMGEFVKSASSTVEAPVARRLRNAFVNNTGSPAPAAPPAATPPTPTPTPTPPRTPTPAPPPGGPRVTAKPMPPRRPGAPTPGPKPKGPVPGPPQSATPAAKPASAHDIEVAAAEARAAALKAEQEAAVKAAQAARQQQRDNVRREPPTEGGPRPGPRPGPGAMPPRPGSPAAGRSGGPTPGPGPRSGGRPPARGAGNNPFGIQGGQQRPPAAGAGGPRPSPASMPPRPSPASMPPRPSPASMPSQRPGRPGGPGSGRPGAGAGRPGGGGGGGGGYRGGGGGGGGGYRGGPGGGGGGGGGGGYRGGPGGGGGGFRGGPGGGRPGGGGRGRGGGAAGAFGRPGGRPTRGRKSKKQRRQEFDNLSAPTMSSGAPRGQGQTVRLSRGASLSDFADKINANPGSLVQEMFNLGEMVTATQSCSDDTLLLLGEHLGFVVQIVSPEDEDRELLAQFNIDLDAEVAEDRLVSRPPVVTVMGHVDHGKTKLLDAIRKANVVAGEAGGITQHIGAYQVHVPHDDQDRAITFIDTPGHEAFTAMRARGAQVTDIVILVVAADDGVMPQTIEALNHAKAADVPIVVAVNKIDKPDANPDKVRQQLTEYGLVAEEYGGDTMFVNVAAKPGTGIDSLLEAVLLTADASLELTAPTDGPAQGVAIEAHLDKGRGAVATVLVQKGTLRAGDSIVAGGAHGRVRAMLDENGNQVAEAGPSRPVLVLGLTAVPGAGDTFLAAEDDRTVRQIAEQRQARRRAAAFANSRGRATLETLMEQLKAGEKTSLNLVLKGDVSGSVEALEDALFNLDIPEEVQLRIIHRGVGSITESDVMLASASSEAVTIIGFNVRAANKVREMADREGVEIRYYTVIYQAIEEIEAALKGLLKPEYEEVELGTAEVREVFRSSKVGNISGCIVRSGLLRRNAKARLLRDGAVVADNLTIGSLKRFKDDATEVREGFECGLTLAGYNNVQVGDVIETFEMREKARV.

The interval 50–407 (AFVNNTGSPA…RGQGQTVRLS (358 aa)) is disordered. Pro residues-rich tracts occupy residues 60 to 89 (PAAP…PPGG) and 96 to 121 (PMPP…PPQS). The span at 136–162 (VAAAEARAAALKAEQEAAVKAAQAARQ) shows a compositional bias: low complexity. Residues 163 to 173 (QQRDNVRREPP) are compositionally biased toward basic and acidic residues. Positions 179–194 (RPGPRPGPGAMPPRPG) are enriched in pro residues. Low complexity predominate over residues 213–222 (GGRPPARGAG). A compositionally biased stretch (pro residues) spans 244-266 (RPSPASMPPRPSPASMPPRPSPA). The segment covering 275-367 (RPGGPGSGRP…GAAGAFGRPG (93 aa)) has biased composition (gly residues). A compositionally biased stretch (basic residues) spans 371-380 (TRGRKSKKQR). Over residues 388–405 (SAPTMSSGAPRGQGQTVR) the composition is skewed to polar residues. Residues 490-662 (SRPPVVTVMG…VLLTADASLE (173 aa)) enclose the tr-type G domain. The interval 499-506 (GHVDHGKT) is G1. 499–506 (GHVDHGKT) serves as a coordination point for GTP. The interval 524–528 (GITQH) is G2. Positions 549 to 552 (DTPG) are G3. Residues 549-553 (DTPGH) and 603-606 (NKID) contribute to the GTP site. The G4 stretch occupies residues 603–606 (NKID). The segment at 639–641 (AAK) is G5.

The protein belongs to the TRAFAC class translation factor GTPase superfamily. Classic translation factor GTPase family. IF-2 subfamily.

The protein resides in the cytoplasm. Functionally, one of the essential components for the initiation of protein synthesis. Protects formylmethionyl-tRNA from spontaneous hydrolysis and promotes its binding to the 30S ribosomal subunits. Also involved in the hydrolysis of GTP during the formation of the 70S ribosomal complex. In Salinispora tropica (strain ATCC BAA-916 / DSM 44818 / JCM 13857 / NBRC 105044 / CNB-440), this protein is Translation initiation factor IF-2.